The chain runs to 534 residues: Zinc finger protein 397 (534 aa).

Ser31 is modified (phosphoserine). Residues 50–132 enclose the SCAN box domain; sequence RQQFRKFCYQ…TLLEDLEREF (83 aa). Glycyl lysine isopeptide (Lys-Gly) (interchain with G-Cter in SUMO2) cross-links involve residues Lys55, Lys171, Lys202, and Lys252. A disordered region spans residues 197-242; sequence DISGEKSQRLSQEPSFGGFSEHKSSLEWQQGSAPGETLRRSPSQRA. 9 consecutive C2H2-type zinc fingers follow at residues 285 to 307, 313 to 335, 341 to 363, 369 to 391, 397 to 419, 425 to 447, 453 to 475, 481 to 503, and 509 to 531; these read YRCD…QRIH, YKCN…QRIH, YECS…RKIH, CKCN…QRIH, YECN…QRIH, YQCN…QRIH, and YICS…QRVH.

The protein belongs to the krueppel C2H2-type zinc-finger protein family.

Its subcellular location is the nucleus. In terms of biological role, DNA-dependent transcriptional repressor. The chain is Zinc finger protein 397 (ZNF397) from Bos taurus (Bovine).